The primary structure comprises 277 residues: Cell wall protein PGA30 (277 aa).

The first 18 residues, 1–18 (MKYFTIATVLTLASSALA), serve as a signal peptide directing secretion. Residues asparagine 129 and asparagine 178 are each glycosylated (N-linked (GlcNAc...) asparagine). Positions 219–246 (VLPSSSTEAPPKTSVAAPSTTAEAQTTA) are disordered. Residues 234–246 (AAPSTTAEAQTTA) are compositionally biased toward polar residues. Glycine 253 is lipidated: GPI-anchor amidated glycine. Residues 254–277 (GANEIVGGGSMAIALAAAAIGLVI) constitute a propeptide, removed in mature form.

The protein belongs to the SRP1/TIP1 family. In terms of processing, the GPI-anchor is attached to the protein in the endoplasmic reticulum and serves to target the protein to the cell surface. There, the glucosamine-inositol phospholipid moiety is cleaved off and the GPI-modified mannoprotein is covalently attached via its lipidless GPI glycan remnant to the 1,6-beta-glucan of the outer cell wall layer.

It is found in the secreted. Its subcellular location is the cell wall. It localises to the membrane. Component of the cell wall involved in virulence which plays a role in the relationship between C.albicans and the host. This Candida albicans (strain SC5314 / ATCC MYA-2876) (Yeast) protein is Cell wall protein PGA30 (PGA30).